Here is a 202-residue protein sequence, read N- to C-terminus: LexA repressor (202 aa).

Positions 27–47 (RAEIAAELGFRSANAAEEHLR) form a DNA-binding region, H-T-H motif. Catalysis depends on for autocatalytic cleavage activity residues S119 and K156.

It belongs to the peptidase S24 family. As to quaternary structure, homodimer.

The enzyme catalyses Hydrolysis of Ala-|-Gly bond in repressor LexA.. Functionally, represses a number of genes involved in the response to DNA damage (SOS response), including recA and lexA. In the presence of single-stranded DNA, RecA interacts with LexA causing an autocatalytic cleavage which disrupts the DNA-binding part of LexA, leading to derepression of the SOS regulon and eventually DNA repair. This chain is LexA repressor, found in Marinobacter nauticus (strain ATCC 700491 / DSM 11845 / VT8) (Marinobacter aquaeolei).